The following is a 298-amino-acid chain: PYK10-binding protein 1 (298 aa).

Residue A2 is modified to N-acetylalanine. Jacalin-type lectin domains lie at 2 to 142 (AQKV…YFAP) and 152 to 295 (AKQL…HVRP). Phosphoserine is present on S20.

It belongs to the jacalin lectin family. As to quaternary structure, component of the PYK10 complex, at least composed of PYK10/BGLU23, BGLU21, BGLU22, JAL22, JAL23, PBP1/JAL30, PBP2/JAL31, JAL32, JAL33, JAL34, JAL35, GLL22 and GLL23. Expressed exclusively in roots.

Its subcellular location is the cytoplasm. Functionally, inhibitor-type lectin that may regulate the correct polymerization of BGLU23/PYK10 upon tissue damage. Activates BGLU21, BGLU22 and BGLU23. The polypeptide is PYK10-binding protein 1 (PBP1) (Arabidopsis thaliana (Mouse-ear cress)).